Reading from the N-terminus, the 344-residue chain is 1-acyl-sn-glycerol-3-phosphate acyltransferase BAT2, chloroplastic (344 aa).

The transit peptide at methionine 1–histidine 49 directs the protein to the chloroplast. A helical membrane pass occupies residues glycine 113–threonine 133. An HXXXXD motif motif is present at residues histidine 188 to aspartate 193. Residues threonine 210–leucine 230 traverse the membrane as a helical segment.

This sequence belongs to the 1-acyl-sn-glycerol-3-phosphate acyltransferase family. Widely expressed.

Its subcellular location is the plastid. The protein localises to the chloroplast membrane. The enzyme catalyses a fatty acyl-[ACP] + a 1-acyl-sn-glycero-3-phosphate = a 1,2-diacyl-sn-glycero-3-phosphate + holo-[ACP]. It catalyses the reaction a 1-acyl-sn-glycero-3-phosphate + an acyl-CoA = a 1,2-diacyl-sn-glycero-3-phosphate + CoA. Its pathway is phospholipid metabolism; CDP-diacylglycerol biosynthesis; CDP-diacylglycerol from sn-glycerol 3-phosphate: step 2/3. Its function is as follows. Plastidial enzyme of the prokaryotic glycerol-3-phosphate pathway that converts lysophosphatidic acid (LPA) into phosphatidic acid by incorporating an acyl moiety at position sn-2. Utilizes palmitoyl-ACP (16:0-ACP) to produce phosphatidic acid containing a saturated group at position sn-2, which is characteristic of lipids synthesized by the prokaryotic pathway. In vitro, can use 16:0-CoA as acyl donor. The chain is 1-acyl-sn-glycerol-3-phosphate acyltransferase BAT2, chloroplastic from Brassica napus (Rape).